The following is a 188-amino-acid chain: Elongation factor P (188 aa).

It belongs to the elongation factor P family.

It is found in the cytoplasm. It functions in the pathway protein biosynthesis; polypeptide chain elongation. In terms of biological role, involved in peptide bond synthesis. Stimulates efficient translation and peptide-bond synthesis on native or reconstituted 70S ribosomes in vitro. Probably functions indirectly by altering the affinity of the ribosome for aminoacyl-tRNA, thus increasing their reactivity as acceptors for peptidyl transferase. This chain is Elongation factor P, found in Chlorobium limicola (strain DSM 245 / NBRC 103803 / 6330).